A 701-amino-acid chain; its full sequence is Elongation factor G (701 aa).

A tr-type G domain is found at 8 to 290; sequence KRYRNIGICA…AVIEFLPAPD (283 aa). Residues 17 to 24, 88 to 92, and 142 to 145 contribute to the GTP site; these read AHVDAGKT, DTPGH, and NKMD.

This sequence belongs to the TRAFAC class translation factor GTPase superfamily. Classic translation factor GTPase family. EF-G/EF-2 subfamily.

Its subcellular location is the cytoplasm. Its function is as follows. Catalyzes the GTP-dependent ribosomal translocation step during translation elongation. During this step, the ribosome changes from the pre-translocational (PRE) to the post-translocational (POST) state as the newly formed A-site-bound peptidyl-tRNA and P-site-bound deacylated tRNA move to the P and E sites, respectively. Catalyzes the coordinated movement of the two tRNA molecules, the mRNA and conformational changes in the ribosome. The sequence is that of Elongation factor G from Marinobacter nauticus (strain ATCC 700491 / DSM 11845 / VT8) (Marinobacter aquaeolei).